The chain runs to 406 residues: S-adenosylmethionine synthase (406 aa).

Residue His5 coordinates ATP. Asp7 is a binding site for Mg(2+). Position 33 (Glu33) interacts with K(+). Residues Glu46 and Gln89 each coordinate L-methionine. The tract at residues 89 to 99 is flexible loop; the sequence is QSPDIAQGVDT. ATP contacts are provided by residues 164–166, 240–241, Asp249, 255–256, Ala272, and Lys276; these read DGK, KF, and RK. Asp249 provides a ligand contact to L-methionine. Residue Lys280 participates in L-methionine binding.

This sequence belongs to the AdoMet synthase family. In terms of assembly, homotetramer; dimer of dimers. Mg(2+) is required as a cofactor. Requires K(+) as cofactor.

It localises to the cytoplasm. The catalysed reaction is L-methionine + ATP + H2O = S-adenosyl-L-methionine + phosphate + diphosphate. Its pathway is amino-acid biosynthesis; S-adenosyl-L-methionine biosynthesis; S-adenosyl-L-methionine from L-methionine: step 1/1. Its function is as follows. Catalyzes the formation of S-adenosylmethionine (AdoMet) from methionine and ATP. The overall synthetic reaction is composed of two sequential steps, AdoMet formation and the subsequent tripolyphosphate hydrolysis which occurs prior to release of AdoMet from the enzyme. In Synechococcus sp. (strain ATCC 27144 / PCC 6301 / SAUG 1402/1) (Anacystis nidulans), this protein is S-adenosylmethionine synthase.